The primary structure comprises 368 residues: Forkhead box protein I2 (368 aa).

The segment at 33-54 (QNQQLPQRPAAPPALGYGRNEY) is disordered. A DNA-binding region (fork-head) is located at residues 124–218 (RPPYSYSSLI…DNGNFRRKRK (95 aa)). Residues 243-272 (SLGSDSPRGASALEQSSYGTPESKSRPAGG) are disordered. Polar residues predominate over residues 255 to 264 (LEQSSYGTPE).

It localises to the nucleus. In terms of biological role, possible transcriptional activator. The polypeptide is Forkhead box protein I2 (Xenopus tropicalis (Western clawed frog)).